The following is a 140-amino-acid chain: MGGDGKVFTLSEVSQHSSAKDCWIVIDGKVYDVTKFLDDHPGGDEVILTSTGKDATDDFEDVGHSSTAKAMLDEYYVGDIDTATVPVKAKFVPPTSTKAVATQDKSSDFVIKLLQFLVPLLILGLAFGIRYYTKTKAPSS.

One can recognise a Cytochrome b5 heme-binding domain in the interval Gly5–Asp81. Residues His40 and His64 each coordinate heme. A helical transmembrane segment spans residues Phe109–Ile129.

Belongs to the cytochrome b5 family. Interacts with CER1, BI-1, FAH1 and FAH2. Expressed in roots, stems, leaves, flowers and siliques.

It localises to the endoplasmic reticulum membrane. Membrane bound hemoprotein which function as an electron carrier for several membrane bound oxygenases, including fatty acid desaturases. The polypeptide is Cytochrome B5 isoform D (Arabidopsis thaliana (Mouse-ear cress)).